A 177-amino-acid polypeptide reads, in one-letter code: Large ribosomal subunit protein uL6 (177 aa).

Belongs to the universal ribosomal protein uL6 family. Part of the 50S ribosomal subunit.

In terms of biological role, this protein binds to the 23S rRNA, and is important in its secondary structure. It is located near the subunit interface in the base of the L7/L12 stalk, and near the tRNA binding site of the peptidyltransferase center. The protein is Large ribosomal subunit protein uL6 of Buchnera aphidicola subsp. Acyrthosiphon kondoi (Acyrthosiphon kondoi symbiotic bacterium).